The chain runs to 430 residues: Trigger factor (430 aa).

Positions 163–248 (GNIAIIDFKG…IKDIKVKELP (86 aa)) constitute a PPIase FKBP-type domain.

The protein belongs to the FKBP-type PPIase family. Tig subfamily.

It is found in the cytoplasm. It carries out the reaction [protein]-peptidylproline (omega=180) = [protein]-peptidylproline (omega=0). Involved in protein export. Acts as a chaperone by maintaining the newly synthesized protein in an open conformation. Functions as a peptidyl-prolyl cis-trans isomerase. This Clostridium botulinum (strain Okra / Type B1) protein is Trigger factor.